A 168-amino-acid polypeptide reads, in one-letter code: Nicotinamide-nucleotide adenylyltransferase (168 aa).

The protein belongs to the archaeal NMN adenylyltransferase family.

Its subcellular location is the cytoplasm. It catalyses the reaction beta-nicotinamide D-ribonucleotide + ATP + H(+) = diphosphate + NAD(+). It participates in cofactor biosynthesis; NAD(+) biosynthesis; NAD(+) from nicotinamide D-ribonucleotide: step 1/1. In Methanosphaerula palustris (strain ATCC BAA-1556 / DSM 19958 / E1-9c), this protein is Nicotinamide-nucleotide adenylyltransferase.